The sequence spans 1245 residues: Pesticidal crystal protein Cry5Ba (1245 aa).

A disordered region spans residues 1219 to 1245 (PLPTDDQSSDGNTTSNTNSNTSMNNNQ). The span at 1222–1245 (TDDQSSDGNTTSNTNSNTSMNNNQ) shows a compositional bias: low complexity.

The protein belongs to the delta endotoxin family.

Functionally, promotes colloidosmotic lysis by binding to the midgut epithelial cells of hymenopteran species. The sequence is that of Pesticidal crystal protein Cry5Ba (cry5Ba) from Bacillus thuringiensis.